A 472-amino-acid polypeptide reads, in one-letter code: Lycopene beta cyclase, chloroplastic (472 aa).

A chloroplast-targeting transit peptide spans 1-25 (MDALLTSPFIPLKKPSHNRKSNTTT). Residues 1-27 (MDALLTSPFIPLKKPSHNRKSNTTTAS) form a disordered region. 62 to 90 (LAVVGGGPAGLAVAKRVSDAGLSVCSIDP) contributes to the NAD(+) binding site.

The protein belongs to the lycopene cyclase family. In terms of tissue distribution, expressed in flower buds and lips. Detected in roots and leaves.

Its subcellular location is the plastid. It is found in the chloroplast. It catalyses the reaction a carotenoid psi-end group = a carotenoid beta-end derivative. Its pathway is carotenoid biosynthesis; beta-carotene biosynthesis. The protein operates within carotenoid biosynthesis; beta-zeacarotene biosynthesis. In terms of biological role, catalyzes the double cyclization reaction which converts lycopene to beta-carotene and neurosporene to beta-zeacarotene. The protein is Lycopene beta cyclase, chloroplastic (LCY-B) of Oncidium hybrid cultivar (Orchid).